We begin with the raw amino-acid sequence, 121 residues long: Large ribosomal subunit protein bL19 (121 aa).

The protein belongs to the bacterial ribosomal protein bL19 family.

Functionally, this protein is located at the 30S-50S ribosomal subunit interface and may play a role in the structure and function of the aminoacyl-tRNA binding site. The chain is Large ribosomal subunit protein bL19 from Acidothermus cellulolyticus (strain ATCC 43068 / DSM 8971 / 11B).